The chain runs to 499 residues: NADH-quinone oxidoreductase subunit 14 (499 aa).

14 helical membrane-spanning segments follow: residues 9-29 (ILPE…GAYL), 37-57 (TLLW…GLGN), 76-96 (FAKV…ADYM), 104-124 (FEFP…VSAG), 126-146 (LLTL…VAAM), 161-181 (FVLG…VYGF), 196-216 (AGHL…GLSF), 235-255 (PTPV…ALIA), 269-289 (WSQI…IAGI), 301-321 (SSIA…AIGV), 324-344 (MLLY…FILS), 369-389 (ALAM…LGFF), 402-422 (GMGW…FYYL), and 446-466 (YLAL…MFGV).

This sequence belongs to the complex I subunit 2 family. As to quaternary structure, NDH-1 is composed of at least 14 different subunits, Nqo1 to Nqo14. The complex has a L-shaped structure, with the hydrophobic arm (subunits Nqo7, Nqo8, Nqo10 to Nqo14) embedded in the inner membrane and the hydrophilic peripheral arm (subunits Nqo1 to Nqo6, Nqo9) protruding into the bacterial cytoplasm. The hydrophilic domain contains all the redox centers.

The protein localises to the cell inner membrane. The catalysed reaction is a quinone + NADH + 5 H(+)(in) = a quinol + NAD(+) + 4 H(+)(out). In terms of biological role, NDH-1 shuttles electrons from NADH, via FMN and iron-sulfur (Fe-S) centers, to quinones in the respiratory chain. The immediate electron acceptor for the enzyme in this species is believed to be ubiquinone. Couples the redox reaction to proton translocation (for every two electrons transferred, four hydrogen ions are translocated across the cytoplasmic membrane), and thus conserves the redox energy in a proton gradient. The chain is NADH-quinone oxidoreductase subunit 14 from Paracoccus denitrificans.